Consider the following 521-residue polypeptide: Leucine-rich repeat-containing protein 24 (521 aa).

A signal peptide spans M1–G23. The 35-residue stretch at L24–P58 folds into the LRRNT domain. LRR repeat units lie at residues G59–P80, A83–A104, R107–G128, Q131–H152, R155–G176, and S179–P200. N91 carries an N-linked (GlcNAc...) asparagine glycan. The 56-residue stretch at N212–P267 folds into the LRRCT domain. An Ig-like C2-type domain is found at P268–N371. An intrachain disulfide couples C289 to C353. Residues Q306–T330 are disordered. N342 and N371 each carry an N-linked (GlcNAc...) asparagine glycan. Residues R374–P395 form a disordered region. Residues A414–C434 form a helical membrane-spanning segment.

It localises to the membrane. The sequence is that of Leucine-rich repeat-containing protein 24 (Lrrc24) from Mus musculus (Mouse).